The primary structure comprises 148 residues: Deoxyuridine 5'-triphosphate nucleotidohydrolase (148 aa).

Residues 68-70 (RSG), N81, 85-87 (TID), and K95 each bind substrate.

It belongs to the dUTPase family. Requires Mg(2+) as cofactor.

It carries out the reaction dUTP + H2O = dUMP + diphosphate + H(+). It participates in pyrimidine metabolism; dUMP biosynthesis; dUMP from dCTP (dUTP route): step 2/2. Its function is as follows. This enzyme is involved in nucleotide metabolism: it produces dUMP, the immediate precursor of thymidine nucleotides and it decreases the intracellular concentration of dUTP so that uracil cannot be incorporated into DNA. The polypeptide is Deoxyuridine 5'-triphosphate nucleotidohydrolase (Rickettsia conorii (strain ATCC VR-613 / Malish 7)).